The following is a 317-amino-acid chain: Large ribosomal subunit protein uL10 (317 aa).

The disordered stretch occupies residues 286–317 (AGAGAAAEKKEEAKKEESESEEDDDMGFGLFD). Basic and acidic residues predominate over residues 292–302 (AEKKEEAKKEE).

It belongs to the universal ribosomal protein uL10 family. P0 forms a pentameric complex by interaction with dimers of P1 and P2. Phosphorylated.

Its function is as follows. Ribosomal protein P0 is the functional equivalent of E.coli protein L10. The chain is Large ribosomal subunit protein uL10 (RpLP0) from Ceratitis capitata (Mediterranean fruit fly).